Reading from the N-terminus, the 752-residue chain is GTPase-activating protein rrc-1 (752 aa).

Residues 165-244 (PAIAAAVVTK…PRDCVMLIDD (80 aa)) enclose the SH3 domain. Residues 281–463 (LELTELFMRT…FCIENSDSLF (183 aa)) form the Rho-GAP domain. 2 disordered regions span residues 523–552 (STGELCGSPPSEVKWRSRSTRSHSTDATFQ) and 582–609 (RSMRPTSRPPPSPRTRRARFSNGGGANN).

Functionally, functions as a GTPase-activating protein (GAP) for ced-10/RAC-1 and CDC42. This Caenorhabditis briggsae protein is GTPase-activating protein rrc-1.